Here is a 345-residue protein sequence, read N- to C-terminus: N-acetyl-gamma-glutamyl-phosphate reductase (345 aa).

C153 is an active-site residue.

This sequence belongs to the NAGSA dehydrogenase family. Type 1 subfamily.

Its subcellular location is the cytoplasm. It carries out the reaction N-acetyl-L-glutamate 5-semialdehyde + phosphate + NADP(+) = N-acetyl-L-glutamyl 5-phosphate + NADPH + H(+). Its pathway is amino-acid biosynthesis; L-arginine biosynthesis; N(2)-acetyl-L-ornithine from L-glutamate: step 3/4. Catalyzes the NADPH-dependent reduction of N-acetyl-5-glutamyl phosphate to yield N-acetyl-L-glutamate 5-semialdehyde. The polypeptide is N-acetyl-gamma-glutamyl-phosphate reductase (Methylacidiphilum infernorum (isolate V4) (Methylokorus infernorum (strain V4))).